The primary structure comprises 322 residues: ATP-dependent 6-phosphofructokinase (322 aa).

G11 is a binding site for ATP. 21-25 (RAVVR) is an ADP binding site. ATP contacts are provided by residues 72–73 (RC) and 102–105 (GDGS). Position 103 (D103) interacts with Mg(2+). Substrate is bound at residue 127–129 (TID). The Proton acceptor role is filled by D129. An ADP-binding site is contributed by R156. Residues R164 and 171 to 173 (MGR) contribute to the substrate site. ADP is bound by residues 187 to 189 (GAE), R213, and 215 to 217 (KKH). Residues E224, R245, and 251-254 (HVQR) contribute to the substrate site.

It belongs to the phosphofructokinase type A (PFKA) family. ATP-dependent PFK group I subfamily. Prokaryotic clade 'B1' sub-subfamily. In terms of assembly, homotetramer. Mg(2+) serves as cofactor.

It is found in the cytoplasm. The enzyme catalyses beta-D-fructose 6-phosphate + ATP = beta-D-fructose 1,6-bisphosphate + ADP + H(+). The protein operates within carbohydrate degradation; glycolysis; D-glyceraldehyde 3-phosphate and glycerone phosphate from D-glucose: step 3/4. Allosterically activated by ADP and other diphosphonucleosides, and allosterically inhibited by phosphoenolpyruvate. Functionally, catalyzes the phosphorylation of D-fructose 6-phosphate to fructose 1,6-bisphosphate by ATP, the first committing step of glycolysis. The sequence is that of ATP-dependent 6-phosphofructokinase from Staphylococcus aureus (strain MRSA252).